The sequence spans 513 residues: Matrix metalloproteinase-27 (513 aa).

The signal sequence occupies residues 1-17 (MKRLLLLFLFFITFSSA). A propeptide spans 18-98 (FPLVRMTENE…PRCGVPDVGQ (81 aa)) (activation peptide). The N-linked (GlcNAc...) asparagine glycan is linked to asparagine 55. Residues 89–96 (PRCGVPDV) carry the Cysteine switch motif. Cysteine 91 is a Zn(2+) binding site. Residue asparagine 110 is glycosylated (N-linked (GlcNAc...) asparagine). Ca(2+)-binding residues include aspartate 121 and aspartate 155. Histidine 165 serves as a coordination point for Zn(2+). Positions 173, 174, and 178 each coordinate Ca(2+). Histidine 181 is a Zn(2+) binding site. Ca(2+) contacts are provided by glycine 188 and aspartate 192. Histidine 194 is a Zn(2+) binding site. The Ca(2+) site is built by aspartate 196 and glutamate 199. Residue histidine 216 coordinates Zn(2+). Glutamate 217 is an active-site residue. Residues histidine 220 and histidine 226 each contribute to the Zn(2+) site. Hemopexin repeat units follow at residues 276–325 (PHAC…WPSL), 326–371 (PADL…GFPG), 373–421 (VKKI…FPGI), and 422–465 (SIRV…WFQC). Cysteine 279 and cysteine 465 form a disulfide bridge. Residue aspartate 286 participates in Ca(2+) binding. 2 residues coordinate Ca(2+): aspartate 377 and aspartate 426. A glycan (N-linked (GlcNAc...) asparagine) is linked at asparagine 452. Residues 466–513 (KEPKNSSFGFDINKEKAHSGGIKILYHKSLSLFIFGIVHLLKNTSIYQ) are required for retention in the endoplasmic reticulum.

The protein belongs to the peptidase M10A family. Ca(2+) serves as cofactor. It depends on Zn(2+) as a cofactor. N-glycosylated. As to expression, expressed in B-cells. Expressed in a subset of endometrial macrophages related to menstruation and in ovarian and peritoneal endometriotic lesions (at protein level).

It is found in the endoplasmic reticulum. Functionally, matrix metalloproteinases degrade protein components of the extracellular matrix such as fibronectin, laminin, gelatins and/or collagens. This chain is Matrix metalloproteinase-27 (MMP27), found in Homo sapiens (Human).